Consider the following 1098-residue polypeptide: Beta-alanine-activating enzyme (1098 aa).

ATP contacts are provided by residues 198 to 206 (TSGTTGIPK), aspartate 428, arginine 442, and lysine 527. A Carrier domain is found at 553-630 (EDLWEKLQYL…EIYNHILQTV (78 aa)). An O-(pantetheine 4'-phosphoryl)serine modification is found at serine 589. Serine 649 and serine 724 each carry phosphoserine.

The protein belongs to the ATP-dependent AMP-binding enzyme family. As to expression, ubiquitously expressed in adult tissues.

Its function is as follows. Covalently binds beta-alanine in an ATP-dependent manner to form a thioester bond with its phosphopantetheine group and transfers it to an, as yet, unknown acceptor. May be required for a post-translational protein modification or for post-transcriptional modification of an RNA. The sequence is that of Beta-alanine-activating enzyme (AASDH) from Homo sapiens (Human).